We begin with the raw amino-acid sequence, 249 residues long: Neurotrophic factor BDNF precursor form (249 aa).

Residues 1–18 (MTILFLTMVISYFGCMKA) form the signal peptide. Residues 19–130 (APMKEANVHG…AANMSMRVRR (112 aa)) constitute a propeptide that is removed on maturation. An N-linked (GlcNAc...) asparagine glycan is attached at Asn123. 3 cysteine pairs are disulfide-bonded: Cys143/Cys210, Cys188/Cys239, and Cys198/Cys241.

It belongs to the NGF-beta family. Monomers and homodimers. Binds to NTRK2/TRKB. Can form heterodimers with other neurotrophin family members, such as NTF3 and NTF4 (in vitro), but the physiological relevance of this is not clear. BDNF precursor form: interacts with the heterodimer formed by NGFR and SORCS2. Mature BDNF has much lower affinity for the heterodimer formed by NGFR and SORCS2. Post-translationally, N-glycosylated and glycosulfated, contrary to mature BDNF. In terms of processing, mature BDNF is produced by proteolytic removal of the propeptide, catalyzed by a FURIN family member. In addition, the precursor form is proteolytically cleaved within the propeptide, but this is not an obligatory intermediate for the production of mature BDNF. Can be converted into mature BDNF by plasmin (PLG).

Its subcellular location is the secreted. Important signaling molecule that activates signaling cascades downstream of NTRK2. During development, promotes the survival and differentiation of selected neuronal populations of the peripheral and central nervous systems. Participates in axonal growth, pathfinding and in the modulation of dendritic growth and morphology. Major regulator of synaptic transmission and plasticity at adult synapses in many regions of the CNS. The versatility of BDNF is emphasized by its contribution to a range of adaptive neuronal responses including long-term potentiation (LTP), long-term depression (LTD), certain forms of short-term synaptic plasticity, as well as homeostatic regulation of intrinsic neuronal excitability. In terms of biological role, important signaling molecule that activates signaling cascades downstream of NTRK2. Activates signaling cascades via the heterodimeric receptor formed by NGFR and SORCS2. Signaling via NGFR and SORCS2 plays a role in synaptic plasticity and long-term depression (LTD). Binding to NGFR and SORCS2 promotes neuronal apoptosis. Promotes neuronal growth cone collapse. This Rattus norvegicus (Rat) protein is Neurotrophic factor BDNF precursor form (Bdnf).